A 475-amino-acid polypeptide reads, in one-letter code: Putative F-box protein At3g58960 (475 aa).

The F-box domain occupies 1 to 49; sequence MDRISSLSNDIISNIVSFLSAKDAAVASVLSKRWQNIYTIVPNLEFDNT.

This chain is Putative F-box protein At3g58960, found in Arabidopsis thaliana (Mouse-ear cress).